The following is a 224-amino-acid chain: tRNA (guanine-N(7)-)-methyltransferase (224 aa).

Glutamate 56, glutamate 81, aspartate 108, and aspartate 131 together coordinate S-adenosyl-L-methionine. The active site involves aspartate 131. Substrate-binding positions include lysine 135, aspartate 167, and 202-205 (TKFE).

This sequence belongs to the class I-like SAM-binding methyltransferase superfamily. TrmB family.

It catalyses the reaction guanosine(46) in tRNA + S-adenosyl-L-methionine = N(7)-methylguanosine(46) in tRNA + S-adenosyl-L-homocysteine. It participates in tRNA modification; N(7)-methylguanine-tRNA biosynthesis. In terms of biological role, catalyzes the formation of N(7)-methylguanine at position 46 (m7G46) in tRNA. The sequence is that of tRNA (guanine-N(7)-)-methyltransferase from Nitrosomonas europaea (strain ATCC 19718 / CIP 103999 / KCTC 2705 / NBRC 14298).